A 1004-amino-acid chain; its full sequence is MAKQEQAPDRANDVFALTSFLYGGNADYIEELYAKYEDDPNSVDPQWRDFFAKLGDNADDVKKNAEGPSWTRKNWPIAANGELVSALDGNWAEVEKHVTDKLKGKAAKGEAKGAAGTPLTAEEITQAARDSVRAIMMIRAYRMRGHLHANLDPLGLAEKPNDYNELEPENYGFTPADYNRKIFIDNVLGLEYATVPEMLDILKRTYCGAIGVEFMHISDPAEKAWIQERIEGPDKKVAFTPEGKKAILSKLIEAEGFEQFIDVKYKGTKRFGLDGGESLIPALEQIVKRGGQMGLKEVVLGMAHRGRLNVLSQVMGKPHRAIFHEFKGGSYTPDDVEGSGDVKYHLGASSDREFDGNKVHLSLTANPSHLEIVNPVVMGKARAKQDLLVGRTRDDMVPLSERAKVLPLLLHGDAAFAGQGVVAECLGLSGLKGHRVAGTLHFIINNQIGFTTNPAFSRSSPYPSDVAKMIEAPIFHVNGDDPEAVVFAAKVATEFRMTFHKPVVIDMFCYRRFGHNEGDEPSFTQPLMYKAIRAHKTTVQLYGEKLIAEGLVTQDDIDRMKADWRQKLEGEFEAGQSYKPNKADWLDGAWAGLRTADNADEQRRGKTAVPVKTLKEIGKKLVEVPKDFHVHRTIQRFLDNRAKMMETGEGIDWATAESLAFGSLAVEAHPIRLSGQDVERGTFSQRHTVLYDQENQNRYIPLNNLQKGQAIYEAINSMLSEEAVLGYEYGYSLSDPRALVLWEAQFGDFANGAQVVFDQFISSGERKWLRMSGLVCLLPHGFEGQGPEHSSARLERYLQLCAEDNMQVANVTTPANYFHILRRQMKRDFRKPLIMMTPKSLLRHKRAISTLAELSGESSFHRLLWDDAQYNKDEGIKLQKDAKIRRVVLCSGKVYYDLYEEREKRGIDDVYLLRVEQLYPFPAKALINELSRFRHAEMVWCQEEPKNMGAWSFIDPYLEWVLAHIDAKHQRVRYAGRPAAASPATGLMSKHLAQLAAFLEDALG.

Belongs to the alpha-ketoglutarate dehydrogenase family. In terms of assembly, homodimer. Part of the 2-oxoglutarate dehydrogenase (OGDH) complex composed of E1 (2-oxoglutarate dehydrogenase), E2 (dihydrolipoamide succinyltransferase) and E3 (dihydrolipoamide dehydrogenase); the complex contains multiple copies of the three enzymatic components (E1, E2 and E3). Thiamine diphosphate is required as a cofactor.

It catalyses the reaction N(6)-[(R)-lipoyl]-L-lysyl-[protein] + 2-oxoglutarate + H(+) = N(6)-[(R)-S(8)-succinyldihydrolipoyl]-L-lysyl-[protein] + CO2. Functionally, E1 component of the 2-oxoglutarate dehydrogenase (OGDH) complex which catalyzes the decarboxylation of 2-oxoglutarate, the first step in the conversion of 2-oxoglutarate to succinyl-CoA and CO(2). The polypeptide is 2-oxoglutarate dehydrogenase E1 component (Brucella melitensis biotype 2 (strain ATCC 23457)).